The sequence spans 164 residues: Phosphopantetheine adenylyltransferase (164 aa).

Ser-9 provides a ligand contact to substrate. ATP is bound by residues 9 to 10 (SF) and His-17. Substrate is bound by residues Lys-41, Thr-74, and Arg-88. ATP contacts are provided by residues 89–91 (GVR), Glu-99, and 124–130 (NSFVASS).

This sequence belongs to the bacterial CoaD family. As to quaternary structure, homohexamer. The cofactor is Mg(2+).

The protein resides in the cytoplasm. It catalyses the reaction (R)-4'-phosphopantetheine + ATP + H(+) = 3'-dephospho-CoA + diphosphate. The protein operates within cofactor biosynthesis; coenzyme A biosynthesis; CoA from (R)-pantothenate: step 4/5. Functionally, reversibly transfers an adenylyl group from ATP to 4'-phosphopantetheine, yielding dephospho-CoA (dPCoA) and pyrophosphate. This Lactobacillus helveticus (strain DPC 4571) protein is Phosphopantetheine adenylyltransferase.